Consider the following 104-residue polypeptide: MAAKIRRDDEVIVLTGKDKGKRGKVKNVLSSGKVIVEGINLVKKHQKAVPALNQPGGIVEKEAAIQVSNVAIFNAATGKADRVGFRFEDGKKVRFFKSNSETIK.

The protein belongs to the universal ribosomal protein uL24 family. As to quaternary structure, part of the 50S ribosomal subunit.

One of two assembly initiator proteins, it binds directly to the 5'-end of the 23S rRNA, where it nucleates assembly of the 50S subunit. In terms of biological role, one of the proteins that surrounds the polypeptide exit tunnel on the outside of the subunit. The protein is Large ribosomal subunit protein uL24 of Shigella dysenteriae serotype 1 (strain Sd197).